The primary structure comprises 475 residues: LEC14B homolog (475 aa).

The disordered stretch occupies residues 1–34; sequence MSYRTRFGKDNSACDSGNAVEGSGSSKGPNEVSN. Polar residues predominate over residues 23–33; the sequence is SGSSKGPNEVS. 5 WD repeats span residues 211 to 240, 252 to 283, 299 to 329, 375 to 411, and 423 to 453; these read DEFG…YVYD, AHSS…KVWD, GHLE…QLWD, GHGV…YIYD, and HHEG…ARWE.

The protein belongs to the WD repeat LEC14B family.

In Prunus armeniaca (Apricot), this protein is LEC14B homolog.